A 121-amino-acid polypeptide reads, in one-letter code: Large ribosomal subunit protein uL22 (121 aa).

It belongs to the universal ribosomal protein uL22 family. In terms of assembly, part of the 50S ribosomal subunit.

This protein binds specifically to 23S rRNA; its binding is stimulated by other ribosomal proteins, e.g. L4, L17, and L20. It is important during the early stages of 50S assembly. It makes multiple contacts with different domains of the 23S rRNA in the assembled 50S subunit and ribosome. Its function is as follows. The globular domain of the protein is located near the polypeptide exit tunnel on the outside of the subunit, while an extended beta-hairpin is found that lines the wall of the exit tunnel in the center of the 70S ribosome. The chain is Large ribosomal subunit protein uL22 from Synechococcus sp. (strain CC9605).